Reading from the N-terminus, the 256-residue chain is Triosephosphate isomerase (256 aa).

Residue 12 to 14 (NWK) coordinates substrate. Histidine 99 acts as the Electrophile in catalysis. Residue glutamate 169 is the Proton acceptor of the active site. Substrate is bound by residues glycine 175, serine 214, and 235–236 (GG).

It belongs to the triosephosphate isomerase family. Homodimer.

The protein resides in the cytoplasm. The catalysed reaction is D-glyceraldehyde 3-phosphate = dihydroxyacetone phosphate. It functions in the pathway carbohydrate biosynthesis; gluconeogenesis. Its pathway is carbohydrate degradation; glycolysis; D-glyceraldehyde 3-phosphate from glycerone phosphate: step 1/1. Involved in the gluconeogenesis. Catalyzes stereospecifically the conversion of dihydroxyacetone phosphate (DHAP) to D-glyceraldehyde-3-phosphate (G3P). This Rhizobium etli (strain ATCC 51251 / DSM 11541 / JCM 21823 / NBRC 15573 / CFN 42) protein is Triosephosphate isomerase.